The primary structure comprises 556 residues: 2-succinyl-5-enolpyruvyl-6-hydroxy-3-cyclohexene-1-carboxylate synthase (556 aa).

This sequence belongs to the TPP enzyme family. MenD subfamily. In terms of assembly, homodimer. Requires Mg(2+) as cofactor. The cofactor is Mn(2+). It depends on thiamine diphosphate as a cofactor.

It carries out the reaction isochorismate + 2-oxoglutarate + H(+) = 5-enolpyruvoyl-6-hydroxy-2-succinyl-cyclohex-3-ene-1-carboxylate + CO2. It functions in the pathway quinol/quinone metabolism; 1,4-dihydroxy-2-naphthoate biosynthesis; 1,4-dihydroxy-2-naphthoate from chorismate: step 2/7. Its pathway is quinol/quinone metabolism; menaquinone biosynthesis. Functionally, catalyzes the thiamine diphosphate-dependent decarboxylation of 2-oxoglutarate and the subsequent addition of the resulting succinic semialdehyde-thiamine pyrophosphate anion to isochorismate to yield 2-succinyl-5-enolpyruvyl-6-hydroxy-3-cyclohexene-1-carboxylate (SEPHCHC). The polypeptide is 2-succinyl-5-enolpyruvyl-6-hydroxy-3-cyclohexene-1-carboxylate synthase (Escherichia coli O157:H7).